The chain runs to 560 residues: SWI/SNF complex subunit SWI3A homolog (560 aa).

The span at 1–13 (MSPPVAGAASSGD) shows a compositional bias: low complexity. The interval 1–22 (MSPPVAGAASSGDGPPGRPPRE) is disordered. Residues 24–127 (YTIPASSGWF…FSASPSRPEA (104 aa)) enclose the SWIRM domain. The SANT domain occupies 242-293 (HSSSAWTDAETLLLLEGVLKHGDDWDLIAQHVRTKNKSECIARLIQLPFGEH). Residues 311-330 (TTDGKVNKSTVKESSSQPTE) show a composition bias toward polar residues. Disordered stretches follow at residues 311–352 (TTDG…EEHP) and 414–445 (QTRA…PDKK). The segment covering 331–342 (TVDDMQIDGNED) has biased composition (acidic residues). Basic and acidic residues-rich tracts occupy residues 343–352 (GADKSVEEHP) and 424–445 (RQSD…PDKK).

In terms of assembly, interacts with LFR.

It localises to the nucleus. Component of a multiprotein complex equivalent of the SWI/SNF complex, an ATP-dependent chromatin-remodeling complex, which is required for the positive and negative regulation of gene expression of a large number of genes. It changes chromatin structure by altering DNA-histone contacts within a nucleosome, leading eventually to a change in nucleosome position, thus facilitating or repressing binding of gene-specific transcription factors. The polypeptide is SWI/SNF complex subunit SWI3A homolog (Oryza sativa subsp. japonica (Rice)).